Reading from the N-terminus, the 273-residue chain is DnaJ homolog subfamily C member 27 (273 aa).

The required for interaction with MAPK1 stretch occupies residues 1-18 (MEANMPKRKEPGRSLRIK). Residues 23–30 (GNAEVGKS), 71–75 (DMAGH), and 134–137 (NKID) contribute to the GTP site. A J domain is found at 217–273 (GSWDMLGVKPGASRDEVNKACRKLAVLLHPDKCVAPGSEDAFKAVVNARTALLKNIK).

It belongs to the small GTPase superfamily. Rab family. In terms of assembly, interacts directly with MAPK1 (wild-type and kinase-deficient forms). Interacts directly (in GTP-bound form) with MAP2K1 (wild-type and kinase-deficient forms).

The protein resides in the nucleus. In terms of biological role, GTPase which can activate the MEK/ERK pathway and induce cell transformation when overexpressed. May act as a nuclear scaffold for MAPK1, probably by association with MAPK1 nuclear export signal leading to enhanced ERK1/ERK2 signaling. This Pongo abelii (Sumatran orangutan) protein is DnaJ homolog subfamily C member 27 (DNAJC27).